The following is a 280-amino-acid chain: Phosphatidylglycerol--prolipoprotein diacylglyceryl transferase (280 aa).

Transmembrane regions (helical) follow at residues 59 to 79 and 97 to 117; these read FLTWATLGVVLGGRLGYILFY and GGMSFHGGALGVIVALALFTW. Arg-142 provides a ligand contact to a 1,2-diacyl-sn-glycero-3-phospho-(1'-sn-glycerol). 2 consecutive transmembrane segments (helical) span residues 207 to 227 and 233 to 253; these read GFLAGLFLFGYAVARSICECF and FIGFLPFGTTMGQILCIPMAI.

The protein belongs to the Lgt family.

Its subcellular location is the cell inner membrane. It carries out the reaction L-cysteinyl-[prolipoprotein] + a 1,2-diacyl-sn-glycero-3-phospho-(1'-sn-glycerol) = an S-1,2-diacyl-sn-glyceryl-L-cysteinyl-[prolipoprotein] + sn-glycerol 1-phosphate + H(+). It participates in protein modification; lipoprotein biosynthesis (diacylglyceryl transfer). In terms of biological role, catalyzes the transfer of the diacylglyceryl group from phosphatidylglycerol to the sulfhydryl group of the N-terminal cysteine of a prolipoprotein, the first step in the formation of mature lipoproteins. This is Phosphatidylglycerol--prolipoprotein diacylglyceryl transferase from Gluconacetobacter diazotrophicus (strain ATCC 49037 / DSM 5601 / CCUG 37298 / CIP 103539 / LMG 7603 / PAl5).